The primary structure comprises 419 residues: D(4) dopamine receptor (419 aa).

The Extracellular portion of the chain corresponds to 1–29; that stretch reads MGNRSTADADGLLAGRGPAAGASAGASAG. N3 is a glycosylation site (N-linked (GlcNAc...) asparagine). A helical transmembrane segment spans residues 30 to 50; sequence LAGQGAAALVGGVLLIGAVLA. Residues 51 to 71 are Cytoplasmic-facing; it reads GNSLVCVSVATERALQTPTNS. The helical transmembrane segment at 72–92 threads the bilayer; sequence FIVSLAAADLLLALLVLPLFV. D80 serves as a coordination point for Na(+). At 93–110 the chain is on the extracellular side; it reads YSEVQGGAWLLSPRLCDA. An intrachain disulfide couples C108 to C185. The chain crosses the membrane as a helical span at residues 111–131; that stretch reads LMAMDVMLCTASIFNLCAISV. Residue D115 coordinates (2R,3R)-nemonapride. Residue S122 coordinates Na(+). The Cytoplasmic segment spans residues 132–152; it reads DRFVAVAVPLRYNRQGGSRRQ. A helical transmembrane segment spans residues 153 to 173; the sequence is LLLIGATWLLSAAVAAPVLCG. The Extracellular segment spans residues 174-192; the sequence is LNDVRGRDPAVCRLEDRDY. The chain crosses the membrane as a helical span at residues 193 to 213; the sequence is VVYSSVCSFFLPCPLMLLLYW. Residue S196 coordinates (2R,3R)-nemonapride. The Cytoplasmic portion of the chain corresponds to 214–346; that stretch reads ATFRGLQRWE…ITGRERKAMR (133 aa). Positions 230-264 are disordered; that stretch reads LHGRAPRRPSGPGPPSPTPPAPRLPQDPCGPDCAP. A compositionally biased stretch (pro residues) spans 238–254; the sequence is PSGPGPPSPTPPAPRLP. A 1; approximate repeat occupies 249–264; sequence PAPRLPQDPCGPDCAP. The segment at 249 to 312 is 4 X 16 AA approximate tandem repeats of [PA]-A-P-G-L-P-[PQR]-[DG]-P-C-G-P-D-C-A-P; the sequence is PAPRLPQDPC…PDPCGSNCAP (64 aa). 2 consecutive repeat copies span residues 265–280 and 281–296. Residues 297-312 form a 4; approximate repeat; the sequence is PAPGLPPDPCGSNCAP. The interval 317 to 336 is disordered; sequence RAAALPPQTPPQTRRRRRAK. A helical membrane pass occupies residues 347–367; the sequence is VLPVVVGAFLLCWTPFFVVHI. Residues 368–382 lie on the Extracellular side of the membrane; the sequence is TQALCPACSVPPRLV. A disulfide bridge links C372 with C375. The chain crosses the membrane as a helical span at residues 383-403; that stretch reads SAVTWLGYVNSALNPVIYTVF. Topologically, residues 404–419 are cytoplasmic; it reads NAEFRNVFRKALRACC. The S-palmitoyl cysteine moiety is linked to residue C419.

This sequence belongs to the G-protein coupled receptor 1 family. Forms homo- and heterooligomers with DRD2. D4.7 allele exhibits higher affinity for homodimers compared to DRD2 heterodimers, while alleles D42. and 4.4 have similar affinities for both. The interaction with DRD2 may modulate agonist-induced downstream signaling. Interacts with CLIC6. Interacts with GPRASP1. May interact with ADORA2A. Interacts with KLHL12. In terms of processing, polyubiquitinated by the BCR(KLHL12) E3 ubiquitin ligase complex: polyubiquitination does not lead to degradation of DRD4 protein. Palmitoylated. Palmitoylation of the C-terminal Cys is important for normal expression at the cell membrane. As to expression, highly expressed in retina. Detected at much lower levels in brain, in amygdala, thalamus, hypothalamus, cerebellum and pituitary.

The protein localises to the cell membrane. Signaling in response to agonists such as dopamine, epinephrine and norepinephrine is modulated by Na(+); lower Na(+) levels result in higher receptor activity (in vitro). Dopamine receptor responsible for neuronal signaling in the mesolimbic system of the brain, an area of the brain that regulates emotion and complex behavior. Activated by dopamine, but also by epinephrine and norepinephrine, and by numerous synthetic agonists and drugs. Agonist binding triggers signaling via G proteins that inhibit adenylyl cyclase. Modulates the circadian rhythm of contrast sensitivity by regulating the rhythmic expression of NPAS2 in the retinal ganglion cells. This is D(4) dopamine receptor (DRD4) from Homo sapiens (Human).